The primary structure comprises 251 residues: Triosephosphate isomerase (251 aa).

Substrate is bound at residue 9–11 (NWK). The active-site Electrophile is histidine 95. The Proton acceptor role is filled by glutamate 167. Residues glycine 173, serine 213, and 234–235 (GG) contribute to the substrate site.

Belongs to the triosephosphate isomerase family. Homodimer.

Its subcellular location is the cytoplasm. It catalyses the reaction D-glyceraldehyde 3-phosphate = dihydroxyacetone phosphate. It participates in carbohydrate biosynthesis; gluconeogenesis. Its pathway is carbohydrate degradation; glycolysis; D-glyceraldehyde 3-phosphate from glycerone phosphate: step 1/1. Functionally, involved in the gluconeogenesis. Catalyzes stereospecifically the conversion of dihydroxyacetone phosphate (DHAP) to D-glyceraldehyde-3-phosphate (G3P). The sequence is that of Triosephosphate isomerase from Lacticaseibacillus casei (strain BL23) (Lactobacillus casei).